The chain runs to 416 residues: LTYYTPDYQTKDTDILAAFRMTPQPGVPAEEAGAAVAAESSTGTWTTVWTDGLTSLDRYKGRCYDIEPVAGEENQYIAYVAYPLDLFEEGSVTNLFTSIVGNVFGFKALRALRLEDLRIPPAYSKTFIGPPHGIQVERDKLTKYGRPLLGCTIKPKLGLSAKNYGRAVYECLRGGLDFTKDDENVNSQPFMRWRDRFLSVAEALFKAQAETGEIKGHYLNATAGTCEEMMKRAIFARELGAPIVMHDYLTGGFTANTSLAYYCRDNGLLLHIHRAMHAVIDRQRNHGMHFRVLAKALRMSGGDHVHAGTVVGKLEGERDVTLGFVDLLRDDYIEKDRSRGVYFTQDWVSMPGVIPVASGGIHVWHMPALTEIFGDDSVLQFGGGTLGHPWGNAPGAVANRVALEACVQARNEGRDL.

Positions 102 and 152 each coordinate substrate. The active-site Proton acceptor is the lysine 154. Lysine 156 lines the substrate pocket. Mg(2+) is bound by residues lysine 180, aspartate 182, and glutamate 183. An N6-carboxylysine modification is found at lysine 180. The active-site Proton acceptor is the histidine 273. Substrate is bound by residues arginine 274, histidine 306, and serine 358.

It belongs to the RuBisCO large chain family. Type I subfamily. In terms of assembly, heterohexadecamer of 8 large chains and 8 small chains; disulfide-linked. The disulfide link is formed within the large subunit homodimers. It depends on Mg(2+) as a cofactor. In terms of processing, the disulfide bond which can form in the large chain dimeric partners within the hexadecamer appears to be associated with oxidative stress and protein turnover.

Its subcellular location is the plastid. It localises to the chloroplast. The catalysed reaction is 2 (2R)-3-phosphoglycerate + 2 H(+) = D-ribulose 1,5-bisphosphate + CO2 + H2O. It catalyses the reaction D-ribulose 1,5-bisphosphate + O2 = 2-phosphoglycolate + (2R)-3-phosphoglycerate + 2 H(+). Functionally, ruBisCO catalyzes two reactions: the carboxylation of D-ribulose 1,5-bisphosphate, the primary event in carbon dioxide fixation, as well as the oxidative fragmentation of the pentose substrate in the photorespiration process. Both reactions occur simultaneously and in competition at the same active site. This Arthropteris beckleri (Fern) protein is Ribulose bisphosphate carboxylase large chain (rbcL).